The following is a 295-amino-acid chain: Alpha-ketoglutarate-dependent dioxygenase alkB homolog 3 (295 aa).

The tract at residues 1–48 is disordered; that stretch reads MGDKRQRARVQGAWATPTKSQSAARPATPARSRPSQTPGPSWRSKEQQ. The segment covering 22–35 has biased composition (low complexity); sequence SAARPATPARSRPS. Residues W115 and 141–143 contribute to the substrate site; that span reads YTY. The Fe2OG dioxygenase domain occupies 172-278; it reads TFNSLLCNFY…RVNLTFRTVY (107 aa). L177 bears the (4R)-5-hydroxyleucine; alternate mark. L177 is modified ((4R)-5-oxoleucine; alternate). 179-181 lines the 2-oxoglutarate pocket; the sequence is NFY. H191 and D193 together coordinate Fe cation. D194 is a substrate binding site. A Fe cation-binding site is contributed by H257. Residues 269–275 and R275 each bind 2-oxoglutarate; that span reads RVNLTFR.

This sequence belongs to the alkB family. In terms of assembly, interacts with the ASCC complex composed of ASCC1, ASCC2 and ASCC3. Interacts directly with ASCC3, and is thereby recruited to the ASCC complex. Interacts with OTUD4; the interaction is direct. Interacts with USP7 and USP9X. Fe(2+) serves as cofactor. Post-translationally, ubiquitinated; undergoes 'Lys-48'-linked polyubiquitination. OTUD4 promotes USP7 and USP9X-dependent deubiquitination of 'Lys-48'-polyubiquitinated ALKBH3 promoting the repair of alkylated DNA lesions.

The protein localises to the nucleus. Its subcellular location is the cytoplasm. It carries out the reaction an N(1)-methyladenosine in mRNA + 2-oxoglutarate + O2 = an adenosine in mRNA + formaldehyde + succinate + CO2. The catalysed reaction is a methylated nucleobase within DNA + 2-oxoglutarate + O2 = a nucleobase within DNA + formaldehyde + succinate + CO2. It catalyses the reaction an N(1)-methyl-2'-deoxyadenosine in single-stranded DNA + 2-oxoglutarate + O2 = a 2'-deoxyadenosine in single-stranded DNA + formaldehyde + succinate + CO2 + H(+). The enzyme catalyses an N(3)-methyl-2'-deoxycytidine in single-stranded DNA + 2-oxoglutarate + O2 = a 2'-deoxycytidine in single-stranded DNA + formaldehyde + succinate + CO2 + H(+). It carries out the reaction a 3,N(4)-etheno-2'-deoxycytidine in single-stranded DNA + 2-oxoglutarate + O2 + H2O = a 2'-deoxycytidine in single-stranded DNA + glyoxal + succinate + CO2. Activated by ascorbate. Dioxygenase that mediates demethylation of DNA and RNA containing 1-methyladenosine (m1A). Repairs alkylated DNA containing 1-methyladenosine (m1A) and 3-methylcytosine (m3C) by oxidative demethylation. Has a strong preference for single-stranded DNA. Able to process alkylated m3C within double-stranded regions via its interaction with ASCC3, which promotes DNA unwinding to generate single-stranded substrate needed for ALKBH3. Can repair exocyclic 3,N4-ethenocytosine adducs in single-stranded DNA. Also acts on RNA. Demethylates N(1)-methyladenosine (m1A) RNA, an epigenetic internal modification of messenger RNAs (mRNAs) highly enriched within 5'-untranslated regions (UTRs) and in the vicinity of start codons. Requires molecular oxygen, alpha-ketoglutarate and iron. The protein is Alpha-ketoglutarate-dependent dioxygenase alkB homolog 3 of Rattus norvegicus (Rat).